Here is an 88-residue protein sequence, read N- to C-terminus: Serine protease inhibitor Kazal-type 11 (88 aa).

Residues 1–24 (MSSTWIKFLFILTLVLLPYFVAES) form the signal peptide. The region spanning 32-87 (LRKVPNCTLYKSESDCSRTLIPVCADNQMTYYNACYFCLEQLVSPIKYKYHGICTK) is the Kazal-like domain. Asparagine 37 is a glycosylation site (N-linked (GlcNAc...) asparagine). Disulfide bonds link cysteine 38-cysteine 69, cysteine 47-cysteine 66, and cysteine 55-cysteine 85.

Expressed in epydiymis, in the caput. Also expressed in seminal vesicles.

The protein localises to the secreted. Probable serine protease inhibitor. The polypeptide is Serine protease inhibitor Kazal-type 11 (Spink11) (Mus musculus (Mouse)).